The chain runs to 586 residues: 2-succinyl-5-enolpyruvyl-6-hydroxy-3-cyclohexene-1-carboxylate synthase (586 aa).

This sequence belongs to the TPP enzyme family. MenD subfamily. Homodimer. Mg(2+) is required as a cofactor. Mn(2+) serves as cofactor. The cofactor is thiamine diphosphate.

It carries out the reaction isochorismate + 2-oxoglutarate + H(+) = 5-enolpyruvoyl-6-hydroxy-2-succinyl-cyclohex-3-ene-1-carboxylate + CO2. It functions in the pathway quinol/quinone metabolism; 1,4-dihydroxy-2-naphthoate biosynthesis; 1,4-dihydroxy-2-naphthoate from chorismate: step 2/7. The protein operates within quinol/quinone metabolism; menaquinone biosynthesis. Its function is as follows. Catalyzes the thiamine diphosphate-dependent decarboxylation of 2-oxoglutarate and the subsequent addition of the resulting succinic semialdehyde-thiamine pyrophosphate anion to isochorismate to yield 2-succinyl-5-enolpyruvyl-6-hydroxy-3-cyclohexene-1-carboxylate (SEPHCHC). In Geobacillus thermodenitrificans (strain NG80-2), this protein is 2-succinyl-5-enolpyruvyl-6-hydroxy-3-cyclohexene-1-carboxylate synthase.